A 556-amino-acid chain; its full sequence is Glutamine--tRNA ligase (556 aa).

The 'HIGH' region signature appears at 35 to 45 (PEPNGYLHIGH). Residues 36–38 (EPN) and 42–48 (HIGHAKS) contribute to the ATP site. L-glutamine-binding residues include Asp-68 and Tyr-213. Residues Thr-232 and 262 to 263 (RL) each bind ATP. The 'KMSKS' region signature appears at 269 to 273 (VTSKR).

This sequence belongs to the class-I aminoacyl-tRNA synthetase family. In terms of assembly, monomer.

It is found in the cytoplasm. The catalysed reaction is tRNA(Gln) + L-glutamine + ATP = L-glutaminyl-tRNA(Gln) + AMP + diphosphate. This chain is Glutamine--tRNA ligase, found in Pseudomonas aeruginosa (strain ATCC 15692 / DSM 22644 / CIP 104116 / JCM 14847 / LMG 12228 / 1C / PRS 101 / PAO1).